We begin with the raw amino-acid sequence, 216 residues long: Large ribosomal subunit protein uL1 (216 aa).

This sequence belongs to the universal ribosomal protein uL1 family.

This chain is Large ribosomal subunit protein uL1, found in Caenorhabditis elegans.